Reading from the N-terminus, the 455-residue chain is Histone chaperone RTT106 (455 aa).

N-acetylserine is present on S2. The dimeric region stretch occupies residues 2-67 (SKLFLDELPE…SSDLLKTDEI (66 aa)). 2 PH domains span residues 68-200 (SETN…GFKI) and 217-301 (INSF…VKRK). The segment at 68-301 (SETNTIFKLE…AKIDDYVKRK (234 aa)) is double PH domain. Residues 305–314 (DKSMSEELKA) show a composition bias toward basic and acidic residues. A disordered region spans residues 305–455 (DKSMSEELKA…DEDGSGVEYD (151 aa)). The span at 319–339 (KGQATDGTADQPSILQEATRQ) shows a compositional bias: polar residues. Composition is skewed to acidic residues over residues 350 to 366 (SDDD…ESDL) and 376 to 395 (DGAE…DEEE). Positions 402–418 (ALNRDNSFASINGQPEQ) are enriched in polar residues. Phosphoserine occurs at positions 408 and 411. Basic and acidic residues predominate over residues 420 to 429 (LQYKEFKEPL). Acidic residues predominate over residues 430–455 (ELEDIPIEIDNDDDEDDEDGSGVEYD). S450 bears the Phosphoserine mark.

This sequence belongs to the RTT106 family. As to quaternary structure, homodimers (via the N-terminal domain). Interacts with the SWI/SNF complex. Interacts with the RSC complex. Interacts with the HIR complex. Interacts with the CAF-1 complex. Interacts with RLF2. Interacts with SIR4. Interacts with YTA7. Interacts with CAC2. Interacts with HPC2. Interacts with HIR2. Interacts with MSI1. Interacts with HIR1. Interacts with histone H3. Interacts with histone H4.

It is found in the nucleus. The protein localises to the chromosome. Its function is as follows. Histones H3 and H4 chaperone involved in the nucleosome formation and heterochromatin silencing. Required for the deposition of H3K56ac-carrying H3-H4 complex onto newly-replicated DNA. Plays a role in the transcriptional regulation of the cell-cycle dependent histone genes by directly recruiting the SWI/SNF and RSC chromatin remodeling complexes to the histone genes in a cell cycle dependent manner. In cooperation with HIR and ASF1, creates a repressive structure at the core histone gene promoter and contributes to their repression outside of S phase. Involved in regulation of Ty1 transposition. The chain is Histone chaperone RTT106 from Saccharomyces cerevisiae (strain ATCC 204508 / S288c) (Baker's yeast).